Reading from the N-terminus, the 682-residue chain is Glutamine--fructose-6-phosphate aminotransferase [isomerizing] 2 (682 aa).

The active-site For GATase activity is the Cys2. The region spanning Cys2–Gly288 is the Glutamine amidotransferase type-2 domain. Ser244 bears the Phosphoserine mark. SIS domains are found at residues His360 to Ser499 and Leu531 to Pro672. Substrate is bound by residues Thr377–Ser378, Ser422–Ser424, Thr427, and His578.

It carries out the reaction D-fructose 6-phosphate + L-glutamine = D-glucosamine 6-phosphate + L-glutamate. It functions in the pathway nucleotide-sugar biosynthesis; UDP-N-acetyl-alpha-D-glucosamine biosynthesis; alpha-D-glucosamine 6-phosphate from D-fructose 6-phosphate: step 1/1. Functionally, controls the flux of glucose into the hexosamine pathway. Most likely involved in regulating the availability of precursors for N- and O-linked glycosylation of proteins. The protein is Glutamine--fructose-6-phosphate aminotransferase [isomerizing] 2 (Gfpt2) of Mus musculus (Mouse).